We begin with the raw amino-acid sequence, 248 residues long: Probable transcriptional regulatory protein FTW_1073 (248 aa).

It belongs to the TACO1 family.

It localises to the cytoplasm. The sequence is that of Probable transcriptional regulatory protein FTW_1073 from Francisella tularensis subsp. tularensis (strain WY96-3418).